The primary structure comprises 230 residues: Antiholin-like protein LrgB (230 aa).

8 helical membrane-spanning segments follow: residues 5-25 (MTPYFGIVVSLIAYGIGTLLF), 30-50 (GFFLFTPLFVAMVLGIVFLKV), 61-81 (GGKMISFFLEPATIAFAIPLY), 92-112 (WQILSAIVVGSICSVVVVYIV), 126-146 (MLPQAATTAIALPISESIGGI), 149-169 (ITSFAVIFNAVIVYALGALFL), 177-197 (PIAKGLALGTAGHALGVAVGI), and 209-229 (IAVTVVGVVTVVVIPMFMPFI).

The protein belongs to the CidB/LrgB family. LrgB subfamily.

The protein resides in the cell membrane. Inhibits the expression or activity of extracellular murein hydrolases by interacting, possibly with LrgA, with the holin-like protein CidA. The LrgAB and CidA proteins may affect the proton motive force of the membrane. May be involved in programmed cell death (PCD), possibly triggering PCD in response to antibiotics and environmental stresses. This is Antiholin-like protein LrgB from Bacillus mycoides (strain KBAB4) (Bacillus weihenstephanensis).